The primary structure comprises 291 residues: Prolyl 4-hydroxylase 5 (291 aa).

At 1-22 the chain is on the cytoplasmic side; that stretch reads MASKSKQHLRYQPRKSVSRSTQ. A helical; Signal-anchor for type II membrane protein membrane pass occupies residues 23–43; sequence AFTVLILLLVVILILLGLGIL. Residues 44–291 lie on the Extracellular side of the membrane; sequence SLPNANRNSS…KWFHVHEFKV (248 aa). A glycan (N-linked (GlcNAc...) asparagine) is linked at N51. Residues 163 to 286 enclose the Fe2OG dioxygenase domain; sequence NGEGLQVLHY…KWSSTKWFHV (124 aa). 2 residues coordinate Fe cation: H181 and D183. N222 carries N-linked (GlcNAc...) asparagine glycosylation. H267 serves as a coordination point for Fe cation. K277 serves as a coordination point for 2-oxoglutarate.

This sequence belongs to the P4HA family. Fe(2+) serves as cofactor. Requires L-ascorbate as cofactor. In terms of tissue distribution, expressed in epidermal root hair cells (trichoblasts).

It localises to the endoplasmic reticulum membrane. It is found in the golgi apparatus membrane. The catalysed reaction is L-prolyl-[collagen] + 2-oxoglutarate + O2 = trans-4-hydroxy-L-prolyl-[collagen] + succinate + CO2. In terms of biological role, catalyzes the post-translational formation of 4-hydroxyproline in -Xaa-Pro-Gly- sequences in proline-rich peptide sequences of plant glycoproteins and other proteins. Hydroxyprolines are important constituent of many plant cell wall glycoproteins such as extensins, hydroxyproline-rich glycoproteins, lectins and arabinogalactan proteins. Possesses high affinity for leucine-rich repeat and proline-rich extensins of root cell walls that are essential for root hair development. Hydroxyprolines define the subsequent O-glycosylation sites by arabinosyltransferases which elongate the O-arabinosides on extensins. This is Prolyl 4-hydroxylase 5 from Arabidopsis thaliana (Mouse-ear cress).